The chain runs to 216 residues: Adenylate kinase (216 aa).

13–18 (GAGKGT) is an ATP binding site. The segment at 33 to 66 (TTGDALRANKDMDISDMDTEYDTPREYMEAGDLV) is NMP. AMP-binding positions include T34, R39, 64 to 66 (DLV), 89 to 92 (GYPR), and Q96. The interval 125-162 (GRRVCDDCGTNYHVEFNQPEEDGVCDECGGDLIQRDDD) is LID. R126 lines the ATP pocket. Zn(2+) contacts are provided by C129, C132, C149, and C152. Residues R159 and R170 each coordinate AMP. Residue Q198 participates in ATP binding.

It belongs to the adenylate kinase family. In terms of assembly, monomer.

It localises to the cytoplasm. The enzyme catalyses AMP + ATP = 2 ADP. The protein operates within purine metabolism; AMP biosynthesis via salvage pathway; AMP from ADP: step 1/1. Catalyzes the reversible transfer of the terminal phosphate group between ATP and AMP. Plays an important role in cellular energy homeostasis and in adenine nucleotide metabolism. This Haloarcula marismortui (strain ATCC 43049 / DSM 3752 / JCM 8966 / VKM B-1809) (Halobacterium marismortui) protein is Adenylate kinase.